Here is a 55-residue protein sequence, read N- to C-terminus: Large ribosomal subunit protein bL33 (55 aa).

Belongs to the bacterial ribosomal protein bL33 family.

This is Large ribosomal subunit protein bL33 from Paenarthrobacter aurescens (strain TC1).